We begin with the raw amino-acid sequence, 284 residues long: MTAIKLDGNLYRDEIFADLAQRVAALKEKGIVPGLATVLVGDDPASHSYVKMKHRDCEQIGVNSIRRDLPADISQEELFAVIDELNADDSCTGYIVQLPLPKHLDENAVLERIDPAKDADGLHPVNLGKLVLNEPAPLPCTPNGSISLLRRFGIELNGAKVVVIGRGVTVGRPIGLMLTRRSENSTVTLCHTGTKDLAAETRAADVIVAAAGQPHMLTADMVKPGAAVLDVGVSRKDGKLLGDVHPDVWEVAGAVSPNPGGVGPLTRAFLVHNVVERAEKLAGL.

Residues 165–167 (GRG), Thr192, and Val233 contribute to the NADP(+) site.

This sequence belongs to the tetrahydrofolate dehydrogenase/cyclohydrolase family. Homodimer.

The enzyme catalyses (6R)-5,10-methylene-5,6,7,8-tetrahydrofolate + NADP(+) = (6R)-5,10-methenyltetrahydrofolate + NADPH. It catalyses the reaction (6R)-5,10-methenyltetrahydrofolate + H2O = (6R)-10-formyltetrahydrofolate + H(+). It participates in one-carbon metabolism; tetrahydrofolate interconversion. Its function is as follows. Catalyzes the oxidation of 5,10-methylenetetrahydrofolate to 5,10-methenyltetrahydrofolate and then the hydrolysis of 5,10-methenyltetrahydrofolate to 10-formyltetrahydrofolate. The sequence is that of Bifunctional protein FolD from Corynebacterium efficiens (strain DSM 44549 / YS-314 / AJ 12310 / JCM 11189 / NBRC 100395).